A 313-amino-acid polypeptide reads, in one-letter code: Protoheme IX farnesyltransferase (313 aa).

9 consecutive transmembrane segments (helical) span residues 29 to 49 (VISL…RGWP), 57 to 77 (LWLL…AGVF), 101 to 123 (LISS…VMLW), 124 to 144 (VWGT…YVVI), 157 to 177 (IVIG…AVTG), 185 to 205 (YLFA…ALMI), 225 to 245 (MTVA…LMPV), 247 to 267 (FGAV…WLLW), and 287 to 307 (AVPL…AGAI).

Belongs to the UbiA prenyltransferase family. Protoheme IX farnesyltransferase subfamily.

It localises to the cell membrane. The catalysed reaction is heme b + (2E,6E)-farnesyl diphosphate + H2O = Fe(II)-heme o + diphosphate. It functions in the pathway porphyrin-containing compound metabolism; heme O biosynthesis; heme O from protoheme: step 1/1. Converts heme B (protoheme IX) to heme O by substitution of the vinyl group on carbon 2 of heme B porphyrin ring with a hydroxyethyl farnesyl side group. In Deinococcus radiodurans (strain ATCC 13939 / DSM 20539 / JCM 16871 / CCUG 27074 / LMG 4051 / NBRC 15346 / NCIMB 9279 / VKM B-1422 / R1), this protein is Protoheme IX farnesyltransferase.